Reading from the N-terminus, the 179-residue chain is Probable chorismate pyruvate-lyase (179 aa).

Substrate-binding residues include R82, L120, and E165.

It belongs to the UbiC family.

It localises to the cytoplasm. It catalyses the reaction chorismate = 4-hydroxybenzoate + pyruvate. It functions in the pathway cofactor biosynthesis; ubiquinone biosynthesis. In terms of biological role, removes the pyruvyl group from chorismate, with concomitant aromatization of the ring, to provide 4-hydroxybenzoate (4HB) for the ubiquinone pathway. This is Probable chorismate pyruvate-lyase from Vibrio cholerae serotype O1 (strain ATCC 39315 / El Tor Inaba N16961).